Here is a 136-residue protein sequence, read N- to C-terminus: Protein PsiE (136 aa).

Transmembrane regions (helical) follow at residues 15–35, 55–75, 82–102, and 108–128; these read ILQTVLNLGLLCLGLILVVFL, YELVEGLVVYFLYFEFIALIV, FHFPLRYFVYIGITAIVRLII, and PLDVLIYSAAILLLVITLWLC.

This sequence belongs to the PsiE family.

The protein resides in the cell inner membrane. The sequence is that of Protein PsiE from Escherichia coli (strain UTI89 / UPEC).